Reading from the N-terminus, the 335-residue chain is Probable nicotianamine synthase 3 (335 aa).

It belongs to the nicotianamine synthase (NAS)-like family.

The enzyme catalyses 3 S-adenosyl-L-methionine = nicotianamine + 3 S-methyl-5'-thioadenosine + 3 H(+). In terms of biological role, synthesizes nicotianamine, a polyamine that is the first intermediate in the synthesis of the phytosiderophores of the mugineic acid type found in gramineae which serves as a sensor for the physiological iron status within the plant, and/or might be involved in the transport of iron. The sequence is that of Probable nicotianamine synthase 3 (NAS3) from Hordeum vulgare (Barley).